Here is a 249-residue protein sequence, read N- to C-terminus: tRNA pseudouridine synthase A (249 aa).

D53 acts as the Nucleophile in catalysis. Y111 contributes to the substrate binding site.

Belongs to the tRNA pseudouridine synthase TruA family. In terms of assembly, homodimer.

The catalysed reaction is uridine(38/39/40) in tRNA = pseudouridine(38/39/40) in tRNA. Its function is as follows. Formation of pseudouridine at positions 38, 39 and 40 in the anticodon stem and loop of transfer RNAs. The sequence is that of tRNA pseudouridine synthase A from Streptococcus suis (strain 98HAH33).